A 91-amino-acid polypeptide reads, in one-letter code: CRISPR-associated endoribonuclease Cas2 2 (91 aa).

Residue aspartate 6 participates in Mg(2+) binding.

This sequence belongs to the CRISPR-associated endoribonuclease Cas2 protein family. In terms of assembly, homodimer, forms a heterotetramer with a Cas1 homodimer. It depends on Mg(2+) as a cofactor.

CRISPR (clustered regularly interspaced short palindromic repeat), is an adaptive immune system that provides protection against mobile genetic elements (viruses, transposable elements and conjugative plasmids). CRISPR clusters contain sequences complementary to antecedent mobile elements and target invading nucleic acids. CRISPR clusters are transcribed and processed into CRISPR RNA (crRNA). Functions as a ssRNA-specific endoribonuclease. Involved in the integration of spacer DNA into the CRISPR cassette. This is CRISPR-associated endoribonuclease Cas2 2 from Moorella thermoacetica (strain ATCC 39073 / JCM 9320).